The following is a 446-amino-acid chain: Palmitoyltransferase PFA4 (446 aa).

Residues 1-8 (MAVQLKWP) lie on the Cytoplasmic side of the membrane. A helical transmembrane segment spans residues 9–29 (ILGVIIPCIIIFSLSYGSHYF). The Lumenal portion of the chain corresponds to 30-40 (ILRHHLTMKQQ). Residues 41–61 (LIYEFYVTMIWISYLLAIYTN) form a helical membrane-spanning segment. At 62-161 (PGRVPKNYKP…GNNNLPHFMR (100 aa)) the chain is on the cytoplasmic side. The DHHC domain maps to 114 to 164 (RYCKKCNNYKPPRSHHCKICQQCVLQMDHHCPWTLNCVGNNNLPHFMRFLG). Cys-144 acts as the S-palmitoyl cysteine intermediate in catalysis. The chain crosses the membrane as a helical span at residues 162-182 (FLGWIIWGTGYLMIQLIKLII). At 183–201 (NYYENSNMPHYLFNKTELV) the chain is on the lumenal side. The chain crosses the membrane as a helical span at residues 202 to 222 (AIIAITPLNFFVFASILVLFI). The Cytoplasmic portion of the chain corresponds to 223-446 (RCLINICKGM…TDFGVDEDSD (224 aa)).

Belongs to the DHHC palmitoyltransferase family. PFA4 subfamily.

It is found in the endoplasmic reticulum membrane. The enzyme catalyses L-cysteinyl-[protein] + hexadecanoyl-CoA = S-hexadecanoyl-L-cysteinyl-[protein] + CoA. Functionally, mediates the reversible addition of palmitate to target proteins, thereby regulating their membrane association and biological function. This is Palmitoyltransferase PFA4 from Candida albicans (strain SC5314 / ATCC MYA-2876) (Yeast).